The sequence spans 216 residues: Probable nicotinate-nucleotide adenylyltransferase (216 aa).

This sequence belongs to the NadD family.

It catalyses the reaction nicotinate beta-D-ribonucleotide + ATP + H(+) = deamido-NAD(+) + diphosphate. It participates in cofactor biosynthesis; NAD(+) biosynthesis; deamido-NAD(+) from nicotinate D-ribonucleotide: step 1/1. In terms of biological role, catalyzes the reversible adenylation of nicotinate mononucleotide (NaMN) to nicotinic acid adenine dinucleotide (NaAD). The sequence is that of Probable nicotinate-nucleotide adenylyltransferase from Buchnera aphidicola subsp. Schizaphis graminum (strain Sg).